A 74-amino-acid polypeptide reads, in one-letter code: Protein SlyX homolog (74 aa).

The protein belongs to the SlyX family.

This chain is Protein SlyX homolog, found in Neisseria meningitidis serogroup C / serotype 2a (strain ATCC 700532 / DSM 15464 / FAM18).